We begin with the raw amino-acid sequence, 253 residues long: Indole-3-glycerol phosphate synthase (253 aa).

It belongs to the TrpC family.

It catalyses the reaction 1-(2-carboxyphenylamino)-1-deoxy-D-ribulose 5-phosphate + H(+) = (1S,2R)-1-C-(indol-3-yl)glycerol 3-phosphate + CO2 + H2O. The protein operates within amino-acid biosynthesis; L-tryptophan biosynthesis; L-tryptophan from chorismate: step 4/5. The protein is Indole-3-glycerol phosphate synthase of Bacillus cereus (strain ATCC 14579 / DSM 31 / CCUG 7414 / JCM 2152 / NBRC 15305 / NCIMB 9373 / NCTC 2599 / NRRL B-3711).